The primary structure comprises 328 residues: MSKKPVRVAVTGAAGQIGYALLFRIASGEMLGKDQPVILQLLEIPDEKAQKALKGVMMELEDCAFPLLAGMEAHGDPMTAFKDADYALLVGSRPRGPGMERAELLSINGAIFTAQGKALNAVASRNVKVLVVGNPANTNAYIAMKAAPDLPRKNFTAMLRLDHNRAASQIAAKTGKPVSSIKQLAVWGNHSPTMYADYRFATIDGASVKDMINDQVWNKDVFLPTVGKRGAAIIEARGLSSAASAANAAIDHMRDWALGTNGAWVTMGVPSNGEYGIPKDVMFGFPVTCANGEYKIVDGLAIDAFSQECINKTLAELQGEQDGVKHLI.

Position 12-18 (12-18 (GAAGQIG)) interacts with NAD(+). Substrate contacts are provided by Arg95 and Arg101. Residues Asn108, Gln115, and 132-134 (VGN) contribute to the NAD(+) site. Substrate-binding residues include Asn134 and Arg165. The Proton acceptor role is filled by His190.

It belongs to the LDH/MDH superfamily. MDH type 2 family.

The catalysed reaction is (S)-malate + NAD(+) = oxaloacetate + NADH + H(+). Its function is as follows. Catalyzes the reversible oxidation of malate to oxaloacetate. The protein is Malate dehydrogenase of Methylibium petroleiphilum (strain ATCC BAA-1232 / LMG 22953 / PM1).